The primary structure comprises 84 residues: Putative membrane protein insertion efficiency factor (84 aa).

Belongs to the UPF0161 family.

It localises to the cell inner membrane. Functionally, could be involved in insertion of integral membrane proteins into the membrane. The polypeptide is Putative membrane protein insertion efficiency factor (Shewanella denitrificans (strain OS217 / ATCC BAA-1090 / DSM 15013)).